A 167-amino-acid chain; its full sequence is Mediator of RNA polymerase II transcription subunit 10 (167 aa).

A disordered region spans residues 54 to 92 (STHTKPHPPPPPPPQPTDPTTAAAPALRDNPDPPLSSIQ). The segment covering 60–70 (HPPPPPPPQPT) has biased composition (pro residues).

Belongs to the Mediator complex subunit 10 family. In terms of assembly, component of the Mediator complex.

It is found in the nucleus. Its function is as follows. Component of the Mediator complex, a coactivator involved in the regulated transcription of nearly all RNA polymerase II-dependent genes. Mediator functions as a bridge to convey information from gene-specific regulatory proteins to the basal RNA polymerase II transcription machinery. Mediator is recruited to promoters by direct interactions with regulatory proteins and serves as a scaffold for the assembly of a functional preinitiation complex with RNA polymerase II and the general transcription factors. This Aspergillus clavatus (strain ATCC 1007 / CBS 513.65 / DSM 816 / NCTC 3887 / NRRL 1 / QM 1276 / 107) protein is Mediator of RNA polymerase II transcription subunit 10 (nut2).